Here is a 371-residue protein sequence, read N- to C-terminus: Beta-1,3-galactosyltransferase 4 (371 aa).

Over 1-4 (MPLS) the chain is Cytoplasmic. The chain crosses the membrane as a helical; Signal-anchor for type II membrane protein span at residues 5-25 (LFRRLLLAVLLLVIIWTLFGP). Over 26–371 (SGLGEELLSL…RCRFIAWLNS (346 aa)) the chain is Lumenal. The N-linked (GlcNAc...) asparagine glycan is linked to asparagine 143. Residues 187–208 (GGPSEQWQKGKEPQEETTAVHK) form a disordered region. Positions 194–207 (QKGKEPQEETTAVH) are enriched in basic and acidic residues.

It belongs to the glycosyltransferase 31 family. Highly expressed in thymus, spleen, kidney and testis and, to a lesser extent, in brain and liver.

Its subcellular location is the golgi apparatus membrane. It carries out the reaction a ganglioside GM2 (d18:1(4E)) + UDP-alpha-D-galactose = a ganglioside GM1 (d18:1(4E)) + UDP + H(+). It catalyses the reaction a ganglioside GM2 + UDP-alpha-D-galactose = a ganglioside GM1 + UDP + H(+). The enzyme catalyses a ganglioside GD2 (d18:1(4E)) + UDP-alpha-D-galactose = a ganglioside GD1b (d18:1(4E)) + UDP + H(+). The catalysed reaction is a ganglioside GA2 (d18:1(4E)) + UDP-alpha-D-galactose = a ganglioside GA1 (d18:1(4E)) + UDP + H(+). Its pathway is protein modification; protein glycosylation. Functionally, involved in GM1/GD1B/GA1 ganglioside biosynthesis. The chain is Beta-1,3-galactosyltransferase 4 (B3galt4) from Rattus norvegicus (Rat).